Reading from the N-terminus, the 311-residue chain is 4-hydroxy-tetrahydrodipicolinate synthase (311 aa).

Thr49 provides a ligand contact to pyruvate. The Proton donor/acceptor role is filled by Tyr138. The active-site Schiff-base intermediate with substrate is Lys166. Pyruvate is bound at residue Ile207.

This sequence belongs to the DapA family. Homotetramer; dimer of dimers.

The protein localises to the cytoplasm. It carries out the reaction L-aspartate 4-semialdehyde + pyruvate = (2S,4S)-4-hydroxy-2,3,4,5-tetrahydrodipicolinate + H2O + H(+). It functions in the pathway amino-acid biosynthesis; L-lysine biosynthesis via DAP pathway; (S)-tetrahydrodipicolinate from L-aspartate: step 3/4. In terms of biological role, catalyzes the condensation of (S)-aspartate-beta-semialdehyde [(S)-ASA] and pyruvate to 4-hydroxy-tetrahydrodipicolinate (HTPA). The sequence is that of 4-hydroxy-tetrahydrodipicolinate synthase from Limosilactobacillus fermentum (strain NBRC 3956 / LMG 18251) (Lactobacillus fermentum).